Reading from the N-terminus, the 431-residue chain is Ribosomal protein uS12 methylthiotransferase RimO (431 aa).

The 117-residue stretch at 4 to 120 (LKLYVIVLGC…LAESINKTKK (117 aa)) folds into the MTTase N-terminal domain. Positions 13, 49, 83, 150, 154, and 157 each coordinate [4Fe-4S] cluster. The Radical SAM core domain occupies 136 to 365 (DSDLPYAYVK…MEVQAEISFL (230 aa)). The 64-residue stretch at 368-431 (QRLVGKVIDV…TYDLEGELVE (64 aa)) folds into the TRAM domain.

It belongs to the methylthiotransferase family. RimO subfamily. It depends on [4Fe-4S] cluster as a cofactor.

The protein localises to the cytoplasm. It catalyses the reaction L-aspartate(89)-[ribosomal protein uS12]-hydrogen + (sulfur carrier)-SH + AH2 + 2 S-adenosyl-L-methionine = 3-methylsulfanyl-L-aspartate(89)-[ribosomal protein uS12]-hydrogen + (sulfur carrier)-H + 5'-deoxyadenosine + L-methionine + A + S-adenosyl-L-homocysteine + 2 H(+). Functionally, catalyzes the methylthiolation of an aspartic acid residue of ribosomal protein uS12. The chain is Ribosomal protein uS12 methylthiotransferase RimO from Fervidobacterium nodosum (strain ATCC 35602 / DSM 5306 / Rt17-B1).